The sequence spans 185 residues: Ribosome-recycling factor (185 aa).

The protein belongs to the RRF family.

The protein localises to the cytoplasm. Responsible for the release of ribosomes from messenger RNA at the termination of protein biosynthesis. May increase the efficiency of translation by recycling ribosomes from one round of translation to another. The protein is Ribosome-recycling factor of Yersinia enterocolitica serotype O:8 / biotype 1B (strain NCTC 13174 / 8081).